The following is a 604-amino-acid chain: ATP-dependent RNA helicase DED1 (604 aa).

The span at 1–19 shows a compositional bias: polar residues; that stretch reads MAELSEQVQNLSINDNNEN. The disordered stretch occupies residues 1–55; sequence MAELSEQVQNLSINDNNENGYVPPHLRGKPRSARNNSSNYNNNNGGYNGGRGGGS. Alanine 2 carries the post-translational modification N-acetylalanine. Positions 34-45 are enriched in low complexity; sequence RNNSSNYNNNNG. Residues 46 to 55 show a composition bias toward gly residues; it reads GYNGGRGGGS. Omega-N-methylarginine is present on arginine 51. The residue at position 62 (arginine 62) is a Dimethylated arginine; alternate. Omega-N-methylarginine; alternate is present on arginine 62. Residues 67–76 show a composition bias toward gly residues; sequence NGGFFGGNNG. A disordered region spans residues 67-94; it reads NGGFFGGNNGGSRSNGRSGGRWIDGKHV. The short motif at 142-170 is the Q motif element; it reads TEFTSPPLDGLLLENIKLARFTKPTPVQK. Lysine 158 is covalently cross-linked (Glycyl lysine isopeptide (Lys-Gly) (interchain with G-Cter in ubiquitin)). Positions 173–362 constitute a Helicase ATP-binding domain; it reads VPIVANGRDL…RDFLSDYIFL (190 aa). 186 to 193 is an ATP binding site; sequence AQTGSGKT. Phosphoserine is present on residues serine 215, serine 218, and serine 263. The DEAD box signature appears at 306–309; sequence DEAD. Residues 373 to 533 form the Helicase C-terminal domain; it reads NITQKVLYVE…EVPSFLKDAM (161 aa). Residues 533–604 form a disordered region; the sequence is MMSAPGSRSN…SGGSNNSSWW (72 aa). Phosphoserine occurs at positions 535, 539, and 543. A Dimethylated arginine; alternate modification is found at arginine 545. Arginine 545 carries the omega-N-methylarginine; alternate modification. Residues serine 572 and serine 576 each carry the phosphoserine modification. An Omega-N-methylarginine modification is found at arginine 578. The span at 584–604 shows a compositional bias: low complexity; that stretch reads GSDSKSSGWGNSGGSNNSSWW. Serine 598 carries the post-translational modification Phosphoserine.

Belongs to the DEAD box helicase family. DDX3/DED1 subfamily. Interacts with the L-A virus GAG protein and the whole L-A virus particles.

Its subcellular location is the cytoplasm. The catalysed reaction is ATP + H2O = ADP + phosphate + H(+). Functionally, ATP-binding RNA helicase involved in translation initiation. Remodels RNA in response to ADP and ATP concentrations by facilitating disruption, but also formation of RNA duplexes. Has weak ATP-dependent affinity for dsRNA, but strong ATP-dependent affinity for ssRNA. Acts as a virus host factor involved in the replication of the MBV and the L-A viruses by promoting the negative-strand RNA synthesis. May be involved in recognition of the preinitiation complex and DNA binding of the RNA polymerase III and play a role in mRNA splicing. This Saccharomyces cerevisiae (strain ATCC 204508 / S288c) (Baker's yeast) protein is ATP-dependent RNA helicase DED1.